Consider the following 113-residue polypeptide: Hemerythrin (113 aa).

7 residues coordinate Fe cation: histidine 25, histidine 54, glutamate 58, histidine 73, histidine 77, histidine 101, and aspartate 106.

This sequence belongs to the hemerythrin family. Homooctamer.

Functionally, hemerythrin is a respiratory protein in blood cells of certain marine worms. The oxygen-binding site in each chain contains two iron atoms. The chain is Hemerythrin from Themiste dyscrita (Peanut worm).